Here is a 194-residue protein sequence, read N- to C-terminus: 7-methyl-GTP pyrophosphatase (194 aa).

Asp69 acts as the Proton acceptor in catalysis.

The protein belongs to the Maf family. YceF subfamily. A divalent metal cation is required as a cofactor.

The protein resides in the cytoplasm. It catalyses the reaction N(7)-methyl-GTP + H2O = N(7)-methyl-GMP + diphosphate + H(+). Functionally, nucleoside triphosphate pyrophosphatase that hydrolyzes 7-methyl-GTP (m(7)GTP). May have a dual role in cell division arrest and in preventing the incorporation of modified nucleotides into cellular nucleic acids. The protein is 7-methyl-GTP pyrophosphatase (yceF) of Shigella flexneri.